Here is a 294-residue protein sequence, read N- to C-terminus: Acetyl-coenzyme A carboxylase carboxyl transferase subunit beta (294 aa).

The 266-residue stretch at 29–294 (LWEKCPECGQ…TQEVKLQTNA (266 aa)) folds into the CoA carboxyltransferase N-terminal domain. Positions 33, 36, 52, and 55 each coordinate Zn(2+). Residues 33–55 (CPECGQVVYRKDLIDNCSVCSNC) form a C4-type zinc finger.

The protein belongs to the AccD/PCCB family. As to quaternary structure, acetyl-CoA carboxylase is a heterohexamer composed of biotin carboxyl carrier protein (AccB), biotin carboxylase (AccC) and two subunits each of ACCase subunit alpha (AccA) and ACCase subunit beta (AccD). It depends on Zn(2+) as a cofactor.

Its subcellular location is the cytoplasm. It catalyses the reaction N(6)-carboxybiotinyl-L-lysyl-[protein] + acetyl-CoA = N(6)-biotinyl-L-lysyl-[protein] + malonyl-CoA. The protein operates within lipid metabolism; malonyl-CoA biosynthesis; malonyl-CoA from acetyl-CoA: step 1/1. In terms of biological role, component of the acetyl coenzyme A carboxylase (ACC) complex. Biotin carboxylase (BC) catalyzes the carboxylation of biotin on its carrier protein (BCCP) and then the CO(2) group is transferred by the transcarboxylase to acetyl-CoA to form malonyl-CoA. This Prochlorococcus marinus (strain NATL1A) protein is Acetyl-coenzyme A carboxylase carboxyl transferase subunit beta.